We begin with the raw amino-acid sequence, 130 residues long: Small ribosomal subunit protein uS9 (130 aa).

Belongs to the universal ribosomal protein uS9 family. In terms of assembly, part of the 30S ribosomal subunit.

The chain is Small ribosomal subunit protein uS9 (rpsI) from Bacillus subtilis (strain 168).